The sequence spans 96 residues: Maintenance of carboxysome distribution protein B (96 aa).

Basic and acidic residues predominate over residues 1–18 (MTNLEDKLSASIKTENKD). The tract at residues 1–96 (MTNLEDKLSA…STHPRRVWPD (96 aa)) is disordered. Residues 59-74 (ARATTTKPAVSKSSKP) show a composition bias toward low complexity.

As to quaternary structure, monomer, associates with McdA:DNA. Interacts with shell components of the carboxysome.

Its subcellular location is the carboxysome. In terms of biological role, mcdA and McdB together mediate carboxysome positioning on the nucleoid and to prevent their aggregation in the cell. Undergoes liquid-liquid phase separation at pH 7.0 in the presence of crowders polyethylene glycol or Ficoll. McdA is an ATPase that forms dynamic gradients on the nucleoid in response to adapter protein McdB, which associates with carboxysomes. The interplay between McdA gradients on the nucleoid and McdB-bound carboxysomes result in the equal spacing of Cbs along the cell length. Stimulates the ATPase activity of McdA, causing McdA to be released from DNA. Its function is as follows. Incorrect positioning (aggregation) of carboxysomes results in reduced CO(2) fixation by encapsulated form 1 ribulose-1,5-bisphosphate carboxylase (RuBisCO, cbbL/cbbS), which leads to slower growth. This Halothiobacillus neapolitanus (strain ATCC 23641 / c2) (Thiobacillus neapolitanus) protein is Maintenance of carboxysome distribution protein B.